Here is a 527-residue protein sequence, read N- to C-terminus: PTS system maltose-specific EIICB component (527 aa).

Positions 1–418 (MMQKIQRFGS…FNIATPGREK (418 aa)) constitute a PTS EIIC type-1 domain. Helical transmembrane passes span 8–28 (FGSAMFVPVLLFAFAGIIVGI), 59–79 (GWTVFNQMPLLFAIGIPVALA), 93–113 (VYLTFNYFVSAILTVWGGAFG), 132–152 (IKTLDTNIIGAIFISSIVVFL), 173–193 (YIVMISFFIMIPIALAVSYIW), 200–220 (IGSLQSFLVASGAVGVWIYTF), 224–244 (ILIPTGLHHFIYTPFIYGPAV), 276–296 (FALHGNSKIFGIPGIALAFYV), 305–325 (LVAGLLIPVTLTAIVAGITEP), 326–346 (IEFTFLFISPFLFAVHAVLAA), 357–377 (VVGNMGGGLIEAVTLNWIPLF), and 382–402 (MTYVYQILIGLSFTAIYFFVF). Residues 449 to 527 (DDTAFLYIEA…RERVEKILNQ (79 aa)) form the PTS EIIB type-1 domain. Residue Cys471 is the Phosphocysteine intermediate; for EIIB activity of the active site.

It localises to the cell membrane. It catalyses the reaction D-maltose(out) + N(pros)-phospho-L-histidyl-[protein] = alpha-maltose 6'-phosphate(in) + L-histidyl-[protein]. The phosphoenolpyruvate-dependent sugar phosphotransferase system (sugar PTS), a major carbohydrate active transport system, catalyzes the phosphorylation of incoming sugar substrates concomitantly with their translocation across the cell membrane. This system is involved in maltose transport. The protein is PTS system maltose-specific EIICB component of Bacillus subtilis (strain 168).